We begin with the raw amino-acid sequence, 539 residues long: Tyrosine-protein kinase csk-1 (539 aa).

The region spanning 43–110 (SPGNDVIVTR…HADCVVRING (68 aa)) is the SH3 domain. Residues 129-148 (PGAASTTSSTSSHHSTAANH) form a disordered region. The segment covering 131–146 (AASTTSSTSSHHSTAA) has biased composition (low complexity). The 91-residue stretch at 151–241 (WFHSMISREN…GLCHRLVTPI (91 aa)) folds into the SH2 domain. In terms of domain architecture, Protein kinase spans 283–535 (IDVGDTIGHG…GQVLQRLTTI (253 aa)). ATP-binding positions include 289–297 (IGHGEFGDV) and K310. D403 acts as the Proton acceptor in catalysis.

Belongs to the protein kinase superfamily. Tyr protein kinase family. CSK subfamily. Mg(2+) is required as a cofactor. The cofactor is Mn(2+). Expressed predominantly in pharyngeal muscles in procorpus, metacorpus and terminal bulb. Expressed also in some neurons (ASE, ADF, AVA, AUA, RMDV and BAG) in the head region, anchor cell, vulva, cells around anus, body wall muscle and gondal distal tip cells.

It catalyses the reaction L-tyrosyl-[protein] + ATP = O-phospho-L-tyrosyl-[protein] + ADP + H(+). In terms of biological role, non-receptor tyrosine-protein kinase which plays a role in pharynx function by regulating pumping and the orientation of pharyngeal muscle fibers, independently of src-1 and src-2. May phosphorylate and thereby negatively regulate src-1 and src-2 activities. The chain is Tyrosine-protein kinase csk-1 from Caenorhabditis elegans.